Consider the following 329-residue polypeptide: Ribosomal protein L11 methyltransferase (329 aa).

4 residues coordinate S-adenosyl-L-methionine: Thr-177, Gly-198, Asp-220, and Asn-264.

This sequence belongs to the methyltransferase superfamily. PrmA family.

Its subcellular location is the cytoplasm. The enzyme catalyses L-lysyl-[protein] + 3 S-adenosyl-L-methionine = N(6),N(6),N(6)-trimethyl-L-lysyl-[protein] + 3 S-adenosyl-L-homocysteine + 3 H(+). Its function is as follows. Methylates ribosomal protein L11. The chain is Ribosomal protein L11 methyltransferase from Helicobacter pylori (strain Shi470).